A 209-amino-acid polypeptide reads, in one-letter code: Protein Sxy (209 aa).

The protein belongs to the Sxy/TfoX family.

In terms of biological role, induces low levels of natural DNA uptake by inducing transcription of the competence genes (the CRP-S regulon) required for DNA transformation. Induction of the CRP-S regulon also requires Sxy-activated promoter (CRP-S), cAMP receptor protein (CRP) and cAMP. Induces CRP-S site-containing genes which are involved in genome maintenance and transcription or encoding transposases and toxin-antitoxin pairs. The sequence is that of Protein Sxy from Escherichia coli (strain K12).